A 148-amino-acid polypeptide reads, in one-letter code: 3-dehydroquinate dehydratase (148 aa).

Catalysis depends on Y23, which acts as the Proton acceptor. Residues N75, H81, and D88 each coordinate substrate. The Proton donor role is filled by H101. Residues 102–103 and R112 contribute to the substrate site; that span reads LS.

This sequence belongs to the type-II 3-dehydroquinase family. As to quaternary structure, homododecamer.

It carries out the reaction 3-dehydroquinate = 3-dehydroshikimate + H2O. The protein operates within metabolic intermediate biosynthesis; chorismate biosynthesis; chorismate from D-erythrose 4-phosphate and phosphoenolpyruvate: step 3/7. Catalyzes a trans-dehydration via an enolate intermediate. This chain is 3-dehydroquinate dehydratase, found in Ectopseudomonas mendocina (strain ymp) (Pseudomonas mendocina).